Here is a 190-residue protein sequence, read N- to C-terminus: Ribose 1,5-bisphosphate phosphokinase PhnN (190 aa).

Residue 10-17 participates in ATP binding; sequence GPSGSGKD.

The protein belongs to the ribose 1,5-bisphosphokinase family.

It carries out the reaction alpha-D-ribose 1,5-bisphosphate + ATP = 5-phospho-alpha-D-ribose 1-diphosphate + ADP. Its pathway is metabolic intermediate biosynthesis; 5-phospho-alpha-D-ribose 1-diphosphate biosynthesis; 5-phospho-alpha-D-ribose 1-diphosphate from D-ribose 5-phosphate (route II): step 3/3. Its function is as follows. Catalyzes the phosphorylation of ribose 1,5-bisphosphate to 5-phospho-D-ribosyl alpha-1-diphosphate (PRPP). This chain is Ribose 1,5-bisphosphate phosphokinase PhnN, found in Pseudomonas fluorescens (strain SBW25).